The following is a 401-amino-acid chain: Tumor necrosis factor receptor superfamily member 11B (401 aa).

Positions 1-21 are cleaved as a signal peptide; that stretch reads MNKWLCCALLVLLDIIEWTTQ. TNFR-Cys repeat units lie at residues 24-62, 65-105, 107-142, and 145-185; these read LPPKYLHYDPETGHQLLCDKCAPGTYLKQHCTVRRKTLC, CPDH…NRVC, CEEGRYLEIEFCLKHRSCPPGSGVVQAGTPERNTVC, and CPDG…DNVC. 8 disulfide bridges follow: cysteine 41–cysteine 54, cysteine 44–cysteine 62, cysteine 65–cysteine 80, cysteine 83–cysteine 97, cysteine 87–cysteine 105, cysteine 107–cysteine 118, cysteine 124–cysteine 142, and cysteine 145–cysteine 160. Asparagine 98 carries an N-linked (GlcNAc...) asparagine glycan. Residues asparagine 165 and asparagine 178 are each glycosylated (N-linked (GlcNAc...) asparagine). Cysteine 166 and cysteine 185 are oxidised to a cystine. Death domains are found at residues 198-269 and 283-365; these read DVTL…MVKK and RHLG…THSL. The N-linked (GlcNAc...) asparagine glycan is linked to asparagine 289.

As to quaternary structure, homodimer. Interacts with TNFSF10 and TNFSF11. In terms of tissue distribution, highly expressed in liver, lung, stomach, intestines and calvaria. Highly expressed in decidua and placenta, and in embryo.

It is found in the secreted. Its function is as follows. Acts as a decoy receptor for TNFSF11/RANKL and thereby neutralizes its function in osteoclastogenesis. Inhibits the activation of osteoclasts and promotes osteoclast apoptosis in vitro. Bone homeostasis seems to depend on the local ratio between TNFSF11 and TNFRSF11B. May also play a role in preventing arterial calcification. May act as decoy receptor for TNFSF10/TRAIL and protect against apoptosis. TNFSF10/TRAIL binding blocks the inhibition of osteoclastogenesis. The protein is Tumor necrosis factor receptor superfamily member 11B (Tnfrsf11b) of Mus musculus (Mouse).